Reading from the N-terminus, the 258-residue chain is UBX domain-containing protein 2A (258 aa).

Over residues 1 to 14 (MKEVDNLDSIKEEW) the composition is skewed to basic and acidic residues. The segment at 1-30 (MKEVDNLDSIKEEWACETGPPDSQPLNDNQ) is disordered. Positions 1 to 152 (MKEVDNLDSI…SATPRIVSKA (152 aa)) are required for interaction with CHRNA3. The interval 1–165 (MKEVDNLDSI…EVDNKSTLSA (165 aa)) is required for inhibition of CHRNA3 ubiquitination and translocation of CHRNA3 to the plasma membrane resulting in an increase in acetylcholine-gated nicotinic acetylcholine receptor currents. The 65-residue stretch at 61–125 (QVDVNIKLWK…VEDKKNEVCM (65 aa)) folds into the SEP domain. The interval 168 to 258 (LNNLEPITRI…QKTAEPFRKL (91 aa)) is required for interaction with VCP. The UBX domain occupies 170-247 (NLEPITRIQI…DLKNAVIIQR (78 aa)).

As to quaternary structure, part of a complex composed of STUB1/CHIP, VCP/p97, CHRNA3, and UBXN2A that modulates the ubiquitination and endoplasmic reticulum-associated degradation (ERAD) of CHRNA3. Within the complex UBXN2A acts as a scaffold protein required for the interaction of CHRNA3 with VCP/p97, this interaction also inhibits CHRNA3 ubiquitination by STUB1/CHIP and subsequently ERAD. Interacts (via SEP domain) with CHRNA3 and interacts (via UBX domain) with VCP/P97; these interactions are required for the interaction of CHRNA3 with the STUB1-VCP-UBXN2A complex. Interacts with HSPA9/MOT-2 (via SBD domain); the interaction inhibits HSPA9/MOT-2 interaction with and degradation of p53, thereby promotes p53 translocation to the nucleus. Interacts with RICTOR. Post-translationally, ubiquitinated. As to expression, expressed in the prefrontal cortex (at protein level). Expressed in the habenula and hippocampus (at protein level). Expressed in peripheral ganglia.

It localises to the golgi apparatus. Its subcellular location is the endoplasmic reticulum. The protein resides in the perikaryon. The protein localises to the cell projection. It is found in the dendrite. It localises to the nucleus. Its subcellular location is the cytoplasm. Functionally, acts to repress the ubiquitination and subsequent endoplasmic reticulum-associated degradation of CHRNA3 by the STUB1-VCP-UBXN2A complex in cortical neurons. Also acts to promote the translocation of CHRNA3 to the plasma membrane and subsequently increases plasma membrane acetylcholine-gated ion-channel activation. Plays a role in the inhibition of STUB1-mediated TP53 degradation, via its interaction with HSPA9 which acts to inhibit TP53 binding to HSPA9. Positively mediates the ubiquitination and proteosomal degradation of RICTOR, may thereby act as a negative regulator of the mTORC2 pathway. The sequence is that of UBX domain-containing protein 2A from Mus musculus (Mouse).